The following is a 255-amino-acid chain: BTB/POZ domain-containing protein KCTD14 (255 aa).

The disordered stretch occupies residues 1–29 (MWQGCAVERPVGRMTSQTPLPQSPRPRRP). The 98-residue stretch at 33-130 (TVVELNVGGE…LLEDMPQIFG (98 aa)) folds into the BTB domain.

The sequence is that of BTB/POZ domain-containing protein KCTD14 (KCTD14) from Homo sapiens (Human).